A 278-amino-acid polypeptide reads, in one-letter code: Proteolipid protein DM beta (278 aa).

The next 4 helical transmembrane spans lie at 30–46 (LIAT…FCGC), 84–100 (VIYG…ILLM), 130–146 (FIML…GVTA), and 213–229 (LFIV…IAMV).

Belongs to the myelin proteolipid protein family.

It localises to the membrane. This chain is Proteolipid protein DM beta, found in Squalus acanthias (Spiny dogfish).